The primary structure comprises 191 residues: CASP-like protein 2U3 (191 aa).

Topologically, residues M1 to R25 are cytoplasmic. Residues L26–I46 traverse the membrane as a helical segment. Residues A47–A68 lie on the Extracellular side of the membrane. Residues F69–L89 form a helical membrane-spanning segment. The Cytoplasmic segment spans residues S90–D114. Residues Q115–A135 form a helical membrane-spanning segment. The Extracellular portion of the chain corresponds to K136–R157. N137 carries an N-linked (GlcNAc...) asparagine glycan. A helical membrane pass occupies residues A158–I178. Residues S179 to V191 lie on the Cytoplasmic side of the membrane.

This sequence belongs to the Casparian strip membrane proteins (CASP) family. As to quaternary structure, homodimer and heterodimers.

It is found in the cell membrane. The protein is CASP-like protein 2U3 of Selaginella moellendorffii (Spikemoss).